The following is a 398-amino-acid chain: Serine/threonine-protein kinase 32A (398 aa).

Gly2 is lipidated: N-myristoyl glycine. A Protein kinase domain is found at 23-281 (FEILRAIGKG…LTDIQNFPYM (259 aa)). Residues 29–37 (IGKGSFGKV) and Lys52 contribute to the ATP site. The active-site Proton acceptor is the Asp146. The segment at 379–398 (ALEQTKNNTEEEEDGQNNNL) is disordered. Acidic residues predominate over residues 388-398 (EEEEDGQNNNL).

This sequence belongs to the protein kinase superfamily. Ser/Thr protein kinase family. The cofactor is Mg(2+).

Its subcellular location is the cell membrane. The enzyme catalyses L-seryl-[protein] + ATP = O-phospho-L-seryl-[protein] + ADP + H(+). It carries out the reaction L-threonyl-[protein] + ATP = O-phospho-L-threonyl-[protein] + ADP + H(+). The chain is Serine/threonine-protein kinase 32A from Mus musculus (Mouse).